The chain runs to 443 residues: UDP-N-acetylmuramate--L-alanine ligase (443 aa).

ATP is bound at residue 111–117 (GAHGKTS).

The protein belongs to the MurCDEF family.

It localises to the cytoplasm. The enzyme catalyses UDP-N-acetyl-alpha-D-muramate + L-alanine + ATP = UDP-N-acetyl-alpha-D-muramoyl-L-alanine + ADP + phosphate + H(+). It participates in cell wall biogenesis; peptidoglycan biosynthesis. Its function is as follows. Cell wall formation. The chain is UDP-N-acetylmuramate--L-alanine ligase from Levilactobacillus brevis (strain ATCC 367 / BCRC 12310 / CIP 105137 / JCM 1170 / LMG 11437 / NCIMB 947 / NCTC 947) (Lactobacillus brevis).